A 566-amino-acid chain; its full sequence is MSAPIISFKNFSFQYNSQTEPTLRDINLDIYPGEKVLIAGPSGSGKSTLGRCLNGLIPQSYPGTVTGQARIAGQTITESSIFALSQDVGTVLQDPDSQFVGLTVVEDMAFSLENDQQTQPAMRQATEQWAQTLDLQDLLTHRPQELSGGQKQRVAMAGVLIDNSKILLFDEPLASLDPASGKASMALIDQLTHTQDLTVIIIEHRIEDVLQQPIDRLIVMQDGAIVANDRPETILRQSLMTQLGLREPLYLSALKLAGVDLATCQHLDNLQALQVPDLTATLQNWTTGVQLQSPTVHDQPLLAIEHLTFGYDPAKPIINDITVTLHQGEMISLVGQNGTGKSTLSNLITGFLMPQSGKMRFNGHSLADQSVKERADQIGYILQDPNQMISTTMIFDEVAAGLVLRGVADDEVKRRVQAVLKVCGLYEFRHWPISALSFGQKKRVTIAAILVLEPAMLILDEPTAGQDLQHYTEMMTFLTKINQEQHMTIMLITHDMHLMLEYTDRTIVLGHGNILMDARPADVLTNASIIQQASLAKTSLYTLAEAHHLNPTEFVAKFVQAEREAR.

2 consecutive ABC transporter domains span residues 6 to 247 (ISFK…GLRE) and 302 to 536 (LAIE…ASLA). Residues 40-47 (GPSGSGKS) and 335-342 (GQNGTGKS) each bind ATP.

It belongs to the ABC transporter superfamily.

It localises to the cell membrane. Probably part of an ABC transporter complex. Responsible for energy coupling to the transport system. The protein is Putative ABC transporter ATP-binding protein lp_0149 of Lactiplantibacillus plantarum (strain ATCC BAA-793 / NCIMB 8826 / WCFS1) (Lactobacillus plantarum).